The primary structure comprises 191 residues: uncharacterized protein (191 aa).

This is an uncharacterized protein from Schizosaccharomyces pombe (strain 972 / ATCC 24843) (Fission yeast).